The chain runs to 245 residues: Polyhedrin (245 aa).

A nuclear localization signal region spans residues 32–35 (KRKK).

The protein belongs to the polyhedrin family.

The protein resides in the host nucleus. Functionally, major component of the virus occlusion bodies which are large proteinaceous structures termed polyhedra. These structures serve as the protective package for the virus particles outside the infected host and allow natural transmission of virus between insect hosts, assisting persistence in the environment. Forms the paracrystalline lattice of polyhedra and interacts with enveloped virions as well as other accessory molecules and structures to form a mature viral occlusion body. The chain is Polyhedrin (PH) from Lepidoptera (butterflies and moths).